Here is a 412-residue protein sequence, read N- to C-terminus: 2,3-bisphosphoglycerate-independent phosphoglycerate mutase (412 aa).

Belongs to the BPG-independent phosphoglycerate mutase family. A-PGAM subfamily.

The catalysed reaction is (2R)-2-phosphoglycerate = (2R)-3-phosphoglycerate. Its pathway is carbohydrate degradation; glycolysis; pyruvate from D-glyceraldehyde 3-phosphate: step 3/5. In terms of biological role, catalyzes the interconversion of 2-phosphoglycerate and 3-phosphoglycerate. The chain is 2,3-bisphosphoglycerate-independent phosphoglycerate mutase (apgM) from Pyrococcus horikoshii (strain ATCC 700860 / DSM 12428 / JCM 9974 / NBRC 100139 / OT-3).